The sequence spans 265 residues: Hydroxyethylthiazole kinase (265 aa).

Residue methionine 43 participates in substrate binding. Residues arginine 119 and serine 165 each contribute to the ATP site. Alanine 192 lines the substrate pocket.

The protein belongs to the Thz kinase family. The cofactor is Mg(2+).

It carries out the reaction 5-(2-hydroxyethyl)-4-methylthiazole + ATP = 4-methyl-5-(2-phosphooxyethyl)-thiazole + ADP + H(+). The protein operates within cofactor biosynthesis; thiamine diphosphate biosynthesis; 4-methyl-5-(2-phosphoethyl)-thiazole from 5-(2-hydroxyethyl)-4-methylthiazole: step 1/1. Catalyzes the phosphorylation of the hydroxyl group of 4-methyl-5-beta-hydroxyethylthiazole (THZ). The polypeptide is Hydroxyethylthiazole kinase (Haemophilus influenzae (strain 86-028NP)).